An 800-amino-acid polypeptide reads, in one-letter code: Phenylalanine--tRNA ligase beta subunit (800 aa).

The 116-residue stretch at 39–154 (SKDIKNLVVG…TEVEPGTDAL (116 aa)) folds into the tRNA-binding domain. The 76-residue stretch at 408–483 (SFVTPIDITA…RIYGYDEIPS (76 aa)) folds into the B5 domain. Mg(2+) contacts are provided by Asp461, Asp467, Glu470, and Glu471. Residues 708–800 (PKFPGVTRDI…ALQAQGATIR (93 aa)) form the FDX-ACB domain.

The protein belongs to the phenylalanyl-tRNA synthetase beta subunit family. Type 1 subfamily. Tetramer of two alpha and two beta subunits. Mg(2+) is required as a cofactor.

It is found in the cytoplasm. The enzyme catalyses tRNA(Phe) + L-phenylalanine + ATP = L-phenylalanyl-tRNA(Phe) + AMP + diphosphate + H(+). This is Phenylalanine--tRNA ligase beta subunit from Staphylococcus haemolyticus (strain JCSC1435).